Consider the following 430-residue polypeptide: Synaptotagmin-11 (430 aa).

The Vesicular portion of the chain corresponds to 1–15 (MAEITNIRPSFDVSP). Residues 16–36 (VAAGLIGASVLVVCVSVTVFV) form a helical membrane-spanning segment. Over 37 to 430 (WTCCHQQAEK…VAKWHSLSEY (394 aa)) the chain is Cytoplasmic. Residues 132–154 (RSPMTSLTPGESKPTSPSSPEED) are disordered. A Phosphoserine modification is found at S133. The segment covering 140 to 150 (PGESKPTSPSS) has biased composition (low complexity). 2 consecutive C2 domains span residues 156–278 (MLGS…QLTR) and 290–425 (SRGE…AKWH). 3 residues coordinate Ca(2+): D249, S252, and D255.

The protein belongs to the synaptotagmin family. In terms of assembly, homodimer. Can also form heterodimers. Interacts with PRKN. Interacts (via C2 2 domain) with AGO2 and SND1; the interaction with SND1 is direct. Interacts with KIF1A; the interaction increases in presence of calcium. The cofactor is Ca(2+). Post-translationally, ubiquitinated, at least by PRKN, and targeted to the proteasome complex for degradation. Ubiquitination is inhibited by ATP13A2. As to expression, highly expressed in brain and at lower levels in other tissues.

The protein localises to the cytoplasmic vesicle membrane. It localises to the perikaryon. It is found in the golgi apparatus. Its subcellular location is the trans-Golgi network membrane. The protein resides in the recycling endosome membrane. The protein localises to the lysosome membrane. It localises to the cytoplasmic vesicle. It is found in the phagosome. Its subcellular location is the cell projection. The protein resides in the axon. The protein localises to the dendrite. It localises to the postsynaptic density. It is found in the clathrin-coated vesicle membrane. In terms of biological role, synaptotagmin family member involved in vesicular and membrane trafficking which does not bind Ca(2+). Inhibits clathrin-mediated and bulk endocytosis in neurons, functions to ensure precision in vesicle retrieval. Plays an important role in dopamine transmission by regulating endocytosis and the vesicle-recycling process. Essential component of a neuronal vesicular trafficking pathway that differs from the synaptic vesicle trafficking pathway but is crucial for development and synaptic plasticity. In macrophages and microglia, inhibits the conventional cytokine secretion, of at least IL6 and TNF, and phagocytosis. In astrocytes, regulates lysosome exocytosis, mechanism required for the repair of injured astrocyte cell membrane. Required for the ATP13A2-mediated regulation of the autophagy-lysosome pathway. In Rattus norvegicus (Rat), this protein is Synaptotagmin-11.